The sequence spans 973 residues: Protein HypA (973 aa).

This is Protein HypA (hypA) from Clostridium perfringens (strain 13 / Type A).